The following is a 342-amino-acid chain: MSAPGGPLARLEARLTREWQRRGALAWALTPFACVFGLCAALRRTAYAQGWKQPVDVGVPVVVVGNVTVGGTGKTPTVIALVDALRAAGFTPGVVSRGYGANVKAPTAVTPASRAAAAGDEPLLIARRTGAPVWVCPDRVAAAQALRAAHPDVDVIVSDDGLQHYRLARTVELVVFDHRLGGNGFLLPAGPLREPLSRHRDATLVNDPYSGALPPWPDTYALALTPGAAWHLDQPALRRPLSQFAHERVLAAAGIGAPERFFATLRAAGLAPATRALPDHYAFADNPFVDDAVDAILITEKDAVKLGASWRDARLWVVPVEAALDPRLIALVVEKLRGRSPA.

Position 68 to 75 (68 to 75 (TVGGTGKT)) interacts with ATP.

It belongs to the LpxK family.

The enzyme catalyses a lipid A disaccharide + ATP = a lipid IVA + ADP + H(+). Its pathway is glycolipid biosynthesis; lipid IV(A) biosynthesis; lipid IV(A) from (3R)-3-hydroxytetradecanoyl-[acyl-carrier-protein] and UDP-N-acetyl-alpha-D-glucosamine: step 6/6. Its function is as follows. Transfers the gamma-phosphate of ATP to the 4'-position of a tetraacyldisaccharide 1-phosphate intermediate (termed DS-1-P) to form tetraacyldisaccharide 1,4'-bis-phosphate (lipid IVA). In Burkholderia cenocepacia (strain HI2424), this protein is Tetraacyldisaccharide 4'-kinase.